The chain runs to 225 residues: MKAFIVRMLLIFIGAILLIQLWIFSSLVWWRTHEVDTTMFMRIDYWSDPSEPIIHEWLDYDDISDNFKHAILAGEDAKFIHHHGFDWDGIRFALERNNEEGEVVAGGSTVSQQLAKNLFLYNKRSFIRKGQETVATWMMERMWSKRRILEVYMNSVEFGKNLYGVEAAAQYYYGKSAKSLTREQAAFLAALLPDPKYYQDHRNDRKLQYRKRVILRYMNSTQIPE.

Residues 9–29 (LLIFIGAILLIQLWIFSSLVW) traverse the membrane as a helical segment.

The protein belongs to the glycosyltransferase 51 family.

It localises to the cell inner membrane. It catalyses the reaction [GlcNAc-(1-&gt;4)-Mur2Ac(oyl-L-Ala-gamma-D-Glu-L-Lys-D-Ala-D-Ala)](n)-di-trans,octa-cis-undecaprenyl diphosphate + beta-D-GlcNAc-(1-&gt;4)-Mur2Ac(oyl-L-Ala-gamma-D-Glu-L-Lys-D-Ala-D-Ala)-di-trans,octa-cis-undecaprenyl diphosphate = [GlcNAc-(1-&gt;4)-Mur2Ac(oyl-L-Ala-gamma-D-Glu-L-Lys-D-Ala-D-Ala)](n+1)-di-trans,octa-cis-undecaprenyl diphosphate + di-trans,octa-cis-undecaprenyl diphosphate + H(+). Its pathway is cell wall biogenesis; peptidoglycan biosynthesis. Its function is as follows. Peptidoglycan polymerase that catalyzes glycan chain elongation from lipid-linked precursors. The chain is Biosynthetic peptidoglycan transglycosylase from Acinetobacter baumannii (strain SDF).